A 173-amino-acid polypeptide reads, in one-letter code: Shikimate kinase (173 aa).

An ATP-binding site is contributed by 11-16 (GTGKTS). Thr15 is a binding site for Mg(2+). Residues Asp33, Arg57, and Gly79 each coordinate substrate. Residue Arg117 participates in ATP binding. Residue Arg136 coordinates substrate.

Belongs to the shikimate kinase family. Monomer. The cofactor is Mg(2+).

Its subcellular location is the cytoplasm. The enzyme catalyses shikimate + ATP = 3-phosphoshikimate + ADP + H(+). It functions in the pathway metabolic intermediate biosynthesis; chorismate biosynthesis; chorismate from D-erythrose 4-phosphate and phosphoenolpyruvate: step 5/7. Its function is as follows. Catalyzes the specific phosphorylation of the 3-hydroxyl group of shikimic acid using ATP as a cosubstrate. In Thermodesulfovibrio yellowstonii (strain ATCC 51303 / DSM 11347 / YP87), this protein is Shikimate kinase.